The chain runs to 319 residues: HTH-type transcriptional regulator YidZ (319 aa).

In terms of domain architecture, HTH lysR-type spans 8–65 (LDLNLLLCLQLLMQERSVTKAAKRMNVTPSAVSKSLAKLRAWFDDPLFVNTPLGLAPT). The H-T-H motif DNA-binding region spans 25 to 44 (VTKAAKRMNVTPSAVSKSLA).

The protein belongs to the LysR transcriptional regulatory family.

Functionally, involved in anaerobic NO protection. The polypeptide is HTH-type transcriptional regulator YidZ (Salmonella typhi).